We begin with the raw amino-acid sequence, 284 residues long: Tropomyosin (284 aa).

Residues 1–284 (MDAIKKKMQA…DMTFTELIGN (284 aa)) are a coiled coil.

Belongs to the tropomyosin family. As to quaternary structure, homodimer.

Functionally, tropomyosin, in association with the troponin complex, plays a central role in the calcium dependent regulation of muscle contraction. The chain is Tropomyosin from Periplaneta fuliginosa (Smokybrown cockroach).